Reading from the N-terminus, the 336-residue chain is DNA-directed RNA polymerase subunit alpha (336 aa).

The segment at 1-232 is alpha N-terminal domain (alpha-NTD); that stretch reads MIQKNWQELI…DQLGVFVNFD (232 aa). The tract at residues 248-336 is alpha C-terminal domain (alpha-CTD); that stretch reads FNPALLKKVD…DLAKRYEDQY (89 aa).

Belongs to the RNA polymerase alpha chain family. Homodimer. The RNAP catalytic core consists of 2 alpha, 1 beta, 1 beta' and 1 omega subunit. When a sigma factor is associated with the core the holoenzyme is formed, which can initiate transcription.

The catalysed reaction is RNA(n) + a ribonucleoside 5'-triphosphate = RNA(n+1) + diphosphate. Its function is as follows. DNA-dependent RNA polymerase catalyzes the transcription of DNA into RNA using the four ribonucleoside triphosphates as substrates. The sequence is that of DNA-directed RNA polymerase subunit alpha from Rhizobium etli (strain CIAT 652).